The following is a 379-amino-acid chain: Junctional adhesion molecule-like (379 aa).

The signal sequence occupies residues 1–20; it reads MLCLLKLIVIPVILAPVGYP. Topologically, residues 21-281 are extracellular; that stretch reads QGLPGLTVSS…QQGILNGNQL (261 aa). 2 consecutive Ig-like V-type domains span residues 24-135 and 140-250; these read PGLT…KPVE and PEEP…KTIV. Residues C45 and C119 are joined by a disulfide bond. N-linked (GlcNAc...) asparagine glycosylation is found at N79, N89, and N125. A disulfide bridge links C158 with C236. Residues 282–302 traverse the membrane as a helical segment; that stretch reads VIIVGIVCATFLLLPVLILIV. Topologically, residues 303 to 379 are cytoplasmic; that stretch reads KKAKWNKSSV…SLVRSSVRSK (77 aa). Y355 carries the phosphotyrosine modification.

Belongs to the immunoglobulin superfamily. In terms of assembly, homodimer; active form in leukocyte-endothelial cell adhesion. Interacts (homodimeric form) with CXADR. Interacts (via cytoplasmic domain) with the PI3 kinase; upon CXADR-binding. Interacts with ITGA4 and ITGB1; integrin alpha-4/beta-1 may regulate leukocyte to endothelial cells adhesion by controlling JAML homodimerization. In terms of tissue distribution, expressed by gamma-delta intraepithelial T cells (at protein level).

The protein resides in the cell membrane. It localises to the cell junction. In terms of biological role, transmembrane protein of the plasma membrane of leukocytes that control their migration and activation through interaction with CXADR, a plasma membrane receptor found on adjacent epithelial and endothelial cells. The interaction between both receptors mediates the activation of gamma-delta T-cells, a subpopulation of T-cells residing in epithelia and involved in tissue homeostasis and repair. Upon epithelial CXADR-binding, JAML induces downstream cell signaling events in gamma-delta T-cells through PI3-kinase and MAP kinases. It results in proliferation and production of cytokines and growth factors by T-cells that in turn stimulate epithelial tissues repair. It also controls the transmigration of leukocytes within epithelial and endothelial tissues through adhesive interactions with epithelial and endothelial CXADR. This chain is Junctional adhesion molecule-like, found in Mus musculus (Mouse).